Consider the following 355-residue polypeptide: S-adenosylmethionine:tRNA ribosyltransferase-isomerase (355 aa).

Belongs to the QueA family. Monomer.

The protein resides in the cytoplasm. The enzyme catalyses 7-aminomethyl-7-carbaguanosine(34) in tRNA + S-adenosyl-L-methionine = epoxyqueuosine(34) in tRNA + adenine + L-methionine + 2 H(+). The protein operates within tRNA modification; tRNA-queuosine biosynthesis. Functionally, transfers and isomerizes the ribose moiety from AdoMet to the 7-aminomethyl group of 7-deazaguanine (preQ1-tRNA) to give epoxyqueuosine (oQ-tRNA). This Erwinia tasmaniensis (strain DSM 17950 / CFBP 7177 / CIP 109463 / NCPPB 4357 / Et1/99) protein is S-adenosylmethionine:tRNA ribosyltransferase-isomerase.